The following is a 698-amino-acid chain: Protein arginine N-methyltransferase 7 (698 aa).

2 consecutive SAM-dependent MTase PRMT-type domains span residues 14 to 357 (QNTW…YSLW) and 366 to 698 (EKPA…EKSE).

The protein belongs to the class I-like SAM-binding methyltransferase superfamily. Protein arginine N-methyltransferase family. PRMT7 subfamily.

Essential arginine methyltransferase that can both catalyze the formation of omega-N monomethylarginine (MMA) and symmetrical dimethylarginine (sDMA). Specifically mediates the symmetrical dimethylation of arginine residues in the small nuclear ribonucleoproteins SmD1 and SmD3. The protein is Protein arginine N-methyltransferase 7 (Art7) of Drosophila mojavensis (Fruit fly).